A 341-amino-acid polypeptide reads, in one-letter code: tRNA N6-adenosine threonylcarbamoyltransferase (341 aa).

Fe cation is bound by residues His-111 and His-115. Substrate contacts are provided by residues Leu-134–Gly-138, Asp-167, Gly-180, and Asn-272. Asp-300 serves as a coordination point for Fe cation.

This sequence belongs to the KAE1 / TsaD family. The cofactor is Fe(2+).

Its subcellular location is the cytoplasm. It catalyses the reaction L-threonylcarbamoyladenylate + adenosine(37) in tRNA = N(6)-L-threonylcarbamoyladenosine(37) in tRNA + AMP + H(+). Required for the formation of a threonylcarbamoyl group on adenosine at position 37 (t(6)A37) in tRNAs that read codons beginning with adenine. Is involved in the transfer of the threonylcarbamoyl moiety of threonylcarbamoyl-AMP (TC-AMP) to the N6 group of A37, together with TsaE and TsaB. TsaD likely plays a direct catalytic role in this reaction. This is tRNA N6-adenosine threonylcarbamoyltransferase from Blochmanniella pennsylvanica (strain BPEN).